Reading from the N-terminus, the 222-residue chain is Small ribosomal subunit protein uS3 (222 aa).

One can recognise a KH type-2 domain in the interval Ile39 to Lys108.

This sequence belongs to the universal ribosomal protein uS3 family. As to quaternary structure, part of the 30S ribosomal subunit. Forms a tight complex with proteins S10 and S14.

In terms of biological role, binds the lower part of the 30S subunit head. Binds mRNA in the 70S ribosome, positioning it for translation. This is Small ribosomal subunit protein uS3 from Clostridium perfringens (strain ATCC 13124 / DSM 756 / JCM 1290 / NCIMB 6125 / NCTC 8237 / Type A).